Here is a 66-residue protein sequence, read N- to C-terminus: MNVTAMFIVLLLTMPLTDGFNIRAINGGELFGLVQRDAGNALDHGFYRRGDCPPWCVGARCRAEKC.

An N-terminal signal peptide occupies residues 1–19 (MNVTAMFIVLLLTMPLTDG). The propeptide occupies 20–49 (FNIRAINGGELFGLVQRDAGNALDHGFYRR).

Belongs to the conotoxin L superfamily. In terms of processing, contains 2 disulfide bonds. As to expression, expressed by the venom duct.

It is found in the secreted. Its function is as follows. Probable neurotoxin with unknown target. Possibly targets ion channels. This peptide could be considered as an apoptosis activator in some cancers (tested on lung and breast cancer cell lines). Provokes the decrease of H1299 lung cancer cells viability after 24 hours treatment, and induces a high Bax/Bcl-2 ratio, which suggests that this peptide can activate apoptosis in H1299 cells. In addition, H1299 and H1437 lung cancer cell lines treated with this peptide have decreased cell viability, activated caspases, and reduced expression of the pro-survival protein NF-kappa-B (NFKB1), indicating activation of apoptosis. In synergy with MicroRNA-101-3p, this synthetic peptide inhibits breast cancer cells (SK-BR-3 and MCF-7) migration, invasion, and proliferation through suppressing the expression of the methyltransferase EZH2. In parallel, this synergy treatment is able to promote the apoptosis of breast cancer cells. Against microbes, this synthetic toxin (at micromolar concentrations) lowers viability and inhibits host cell invasion by the opportunistic parasite Toxoplasma gondii (tachyzoite form). In addition, it permits T.gondii intracellular replication to decrease while viability of the host cell is unaffected. This Californiconus californicus (California cone) protein is Conotoxin Cl14.1a.